The chain runs to 221 residues: Germin-like protein 5-1 (221 aa).

The N-terminal stretch at 1 to 25 is a signal peptide; sequence MARPSLPCAVVAVLLLALLPTPSTA. Cys35 and Cys50 form a disulfide bridge. The 149-residue stretch at 62–210 folds into the Cupin type-1 domain; it reads KGLAAAGNTN…AFQVGTKEVE (149 aa). Residue Asn71 is glycosylated (N-linked (GlcNAc...) asparagine). Residues His110, His112, Glu117, and His156 each contribute to the Mn(2+) site.

It belongs to the germin family. Oligomer (believed to be a pentamer but probably hexamer).

Its subcellular location is the secreted. It is found in the extracellular space. The protein resides in the apoplast. In terms of biological role, may play a role in plant defense. Probably has no oxalate oxidase activity even if the active site is conserved. This chain is Germin-like protein 5-1, found in Oryza sativa subsp. japonica (Rice).